A 121-amino-acid polypeptide reads, in one-letter code: Basic phospholipase A2 BmTX-I (121 aa).

Disulfide bonds link Cys-26/Cys-114, Cys-28/Cys-45, Cys-44/Cys-95, Cys-50/Cys-121, Cys-51/Cys-88, Cys-58/Cys-82, and Cys-76/Cys-86. The Ca(2+) site is built by Tyr-27, Gly-29, and Gly-31. His-48 is a catalytic residue. Asp-49 is a binding site for Ca(2+). Residue Asp-89 is part of the active site.

Ca(2+) is required as a cofactor. Expressed by the venom gland.

The protein localises to the secreted. It catalyses the reaction a 1,2-diacyl-sn-glycero-3-phosphocholine + H2O = a 1-acyl-sn-glycero-3-phosphocholine + a fatty acid + H(+). With respect to regulation, inhibited by magnesium, cadmium and manganese ions. Also inhibited by crotapotin. Functionally, snake venom phospholipase A2 (PLA2) that shows enzymatic activity in the presence of a synthetic substrate. In vitro, blocks the neuromuscular transmission in young chick biventer cervicis preparations. In mice, induces myonecrosis and a systemic interleukin-6 response upon intramuscular injection. Also induces edema and exerts a strong pro-inflammatory effect. PLA2 catalyzes the calcium-dependent hydrolysis of the 2-acyl groups in 3-sn-phosphoglycerides. This is Basic phospholipase A2 BmTX-I from Bothrops moojeni (Lance-headed viper).